We begin with the raw amino-acid sequence, 162 residues long: Disulfide bond formation protein B (162 aa).

Over 1 to 8 the chain is Cytoplasmic; it reads MTPLFRKA. A helical membrane pass occupies residues 9–25; it reads VWLLFAVSVCAFAGSLA. At 26–43 the chain is on the periplasmic side; the sequence is AQYVLGMEPCVLCISQRL. Cysteines 35 and 38 form a disulfide. Residues 44 to 60 traverse the membrane as a helical segment; that stretch reads CVLATALCTAIVLMCRP. The Cytoplasmic portion of the chain corresponds to 61–67; that stretch reads RRRAGGL. Residues 68 to 85 form a helical membrane-spanning segment; it reads FGAVFISIPAVTGISVAA. Topologically, residues 86–141 are periplasmic; sequence YQLWLQSLPPGTAPSCGAPWTFRLKGWPLFDWFEPVVRGFGNCAEPDYLLGIALPV. A disulfide bridge connects residues Cys-101 and Cys-128. Residues 142-160 traverse the membrane as a helical segment; the sequence is WSVAYFLAVVLTVWWAWAR. The Cytoplasmic segment spans residues 161 to 162; that stretch reads AK.

It belongs to the DsbB family.

Its subcellular location is the cell inner membrane. Functionally, required for disulfide bond formation in some periplasmic proteins. Acts by oxidizing the DsbA protein. The polypeptide is Disulfide bond formation protein B (Neisseria meningitidis serogroup B (strain ATCC BAA-335 / MC58)).